A 131-amino-acid polypeptide reads, in one-letter code: Small ribosomal subunit protein bS6 (131 aa).

The segment at Asp94 to Asp131 is disordered. The span at Arg117 to Asp131 shows a compositional bias: basic and acidic residues.

It belongs to the bacterial ribosomal protein bS6 family.

Binds together with bS18 to 16S ribosomal RNA. This is Small ribosomal subunit protein bS6 from Psychrobacter cryohalolentis (strain ATCC BAA-1226 / DSM 17306 / VKM B-2378 / K5).